The sequence spans 888 residues: MKILKSLVLLVLFIVMPAKAHDAFSWMSTSFSGLKGLFGCLEVPEFTSFQESNIGINLSKAGAWQSTGHTVEKGKLLKINWSIAGVTTEPRKYLVLYRIDPRFSTPQVFIKTYNYSKLQFEALGFPRFVTNSNSSIPGAIPPDKDLDALSFTKMSDSIKYFNYSKNNVKIEVKAGDVVNISLVGKDNFFTSNTLDNILTEELDSSIFAPSALYTQSNLGNFDNRIIYASAKEVCDIIDAARDPDKPSGCSGTGAATKYKSINSNEALVGKPMMIGAIHNFMGLINSCPEHSGINTRPACYYDQGRGMIIKVGGQVIKERDQSFVKSGRNSFIYYQATRDGIMNFTSDWQVSNMFNNSVLMSDWIRRFLNYPSFIDYINQNDWSANFLYFGRYSMIVEIGNGANSISADVQQNISLEYLITYDGTLPDPSIRGTPVDYNFAADAPKDGYLWLRVVNPNSNIQGVVSVNYANYTGTTWFSDIVYNGAIKPITDQFRTFSKNFYIKLIKNSAVQNIVKAALTLYVIIFGLMFVAGALKLTAIEVITRICKIAIVAFLIREESWNFFNTYFFSVFTDGINFFITNVVGATSSRSNIFGFIDPIFDKYTNGRIWGLLFIELLQIHNGLAFIAIITIYSLITYFRAILEVIIGYVIAFIGITVMISLAPFFIILMLFEKTKSLFDNWISTLLSYVVQPTILLIFFLLIDQVLSEQLLKVVVRACWDTLIPIKIGLDLTNLGIPINFSFTLPFLPGIPFYVPDVPEISRSNIFTNNANTFLVLFTTSLLFYSYCLMSYGLVTFVNIVVGMLTNVTPARISGNYQARSDPVGAVMQDIGSVTTPMKNASMVPARVFKDKIIDQNYKARKSEGGVEFTNKFFSERNDITKKEEGARE.

The N-terminal stretch at 1–20 is a signal peptide; that stretch reads MKILKSLVLLVLFIVMPAKA. A run of 6 helical transmembrane segments spans residues 513 to 533, 565 to 585, 611 to 631, 649 to 669, 682 to 702, and 781 to 801; these read IVKA…VAGA, TYFF…VVGA, LLFI…IITI, VIAF…IILM, ISTL…FLLI, and LLFY…NIVV.

Belongs to the TrbL/VirB6 family.

The protein resides in the cell membrane. This is an uncharacterized protein from Rickettsia prowazekii (strain Madrid E).